The chain runs to 171 residues: Co-chaperone protein HscB (171 aa).

A J domain is found at 2–74 (DYFTLFGLPA…LTRAEYLLSL (73 aa)).

It belongs to the HscB family. As to quaternary structure, interacts with HscA and stimulates its ATPase activity. Interacts with IscU.

Co-chaperone involved in the maturation of iron-sulfur cluster-containing proteins. Seems to help targeting proteins to be folded toward HscA. In Salmonella typhimurium (strain LT2 / SGSC1412 / ATCC 700720), this protein is Co-chaperone protein HscB.